A 419-amino-acid chain; its full sequence is uncharacterized protein (419 aa).

Transmembrane regions (helical) follow at residues Met5–Ile25, Ala26–Ile46, Phe53–Leu73, Val102–Ile122, Val144–Val164, Phe170–Phe190, Ala210–Leu230, Leu234–Leu254, Ala274–Phe294, Ile309–Pro329, Met332–Leu352, Met360–Ile380, and Leu396–Leu416.

The protein belongs to the YiaN/YgiK family.

The protein resides in the cell inner membrane. This is an uncharacterized protein from Sinorhizobium fredii (strain NBRC 101917 / NGR234).